The chain runs to 835 residues: Lon protease (835 aa).

A Lon N-terminal domain is found at 4–224; that stretch reads LPYIAIRNQL…LAINMLINAI (221 aa). Residue 412–419 coordinates ATP; that stretch reads GPPGTGKT. The region spanning 649–832 is the Lon proteolytic domain; it reads QPKAGVVNAL…DEIFKYIFEA (184 aa). Active-site residues include S738 and K781.

It belongs to the peptidase S16 family. Homohexamer. Organized in a ring with a central cavity.

The protein localises to the cytoplasm. The catalysed reaction is Hydrolysis of proteins in presence of ATP.. ATP-dependent serine protease that mediates the selective degradation of mutant and abnormal proteins as well as certain short-lived regulatory proteins. Required for cellular homeostasis and for survival from DNA damage and developmental changes induced by stress. Degrades polypeptides processively to yield small peptide fragments that are 5 to 10 amino acids long. Binds to DNA in a double-stranded, site-specific manner. This Metamycoplasma arthritidis (strain 158L3-1) (Mycoplasma arthritidis) protein is Lon protease.